The primary structure comprises 257 residues: Protein YIPF5 (257 aa).

At 1 to 124 (MSGFDNLNSG…RAADGSIMNE (124 aa)) the chain is on the cytoplasmic side. Residues 75 to 106 (PTTPQPFYGDSFEEEPPLLEELGINFDHIWQK) are interaction with Sec23. The helical transmembrane segment at 125-145 (TDLAGPVVFCLAFGATLLLAG) threads the bilayer. Position 146 (Lys146) is a topological domain, lumenal. The helical transmembrane segment at 147-167 (IQFGYVYGISAIGCLGMFCLL) threads the bilayer. At 168 to 173 (NLMSMT) the chain is on the cytoplasmic side. A helical membrane pass occupies residues 174–194 (GVSFGCVASVLGYCLLPMILL). Residues 195-196 (SS) lie on the Lumenal side of the membrane. Residues 197–217 (FAVVFSLQGMVGILLTATIIG) traverse the membrane as a helical segment. Over 218 to 236 (WCSFSASKIFISALAMDGQ) the chain is Cytoplasmic. The helical transmembrane segment at 237 to 257 (QLLVAYPCALLYGVFALISVF) threads the bilayer.

This sequence belongs to the YIP1 family. In terms of assembly, interacts with the COPII coat components Sec23 (SEC23A and/or SEC23B) and Sec24 (SEC24A and/or SEC24B). Interacts with YIF1A. May interact with RAB1A. Interacts with YIPF3 and YIPF4. In terms of tissue distribution, ubiquitously expressed.

Its subcellular location is the golgi apparatus. It localises to the cis-Golgi network membrane. The protein localises to the cytoplasmic vesicle. It is found in the COPII-coated vesicle. The protein resides in the endoplasmic reticulum membrane. In terms of biological role, plays a role in transport between endoplasmic reticulum and Golgi. In pancreatic beta cells, required to transport proinsulin from endoplasmic reticulum into the Golgi. The polypeptide is Protein YIPF5 (Mus musculus (Mouse)).